The following is an 891-amino-acid chain: 26S proteasome non-ATPase regulatory subunit 2 homolog B (891 aa).

The segment at 1–43 (MAPVPDPNSVGGGAKRDEATTKIPSKDSKKKDDKKEEDLSEED) is disordered. A compositionally biased stretch (basic and acidic residues) spans 14-37 (AKRDEATTKIPSKDSKKKDDKKEE). 7 PC repeats span residues 414–447 (SAVASLGMIQLWDVETGLGHLDKYFHSNDNPVVA), 448–484 (GALLGVGIVNCGIKNDCDPAFALLSGYIDNEDSSVRI), 485–519 (GAIMGLGIAYAGSQNDQIKIRLSPILNDANAPLDV), 522–556 (FAALSLGMIYVGSCNEEVAQSIIFALMDRSEAELG), 565–594 (LGLGLLYLGKQESVEATAEVSKTFNEKIRK), 674–705 (LALGLLCISNPKVTVMDTLSRLSHDTDSEVAM), and 724–739 (AGMLRNLSSYYYKDAS).

It belongs to the proteasome subunit S2 family. As to quaternary structure, component of the 19S regulatory particle (RP/PA700) base subcomplex of the 26S proteasome. The 26S proteasome is composed of a core protease (CP), known as the 20S proteasome, capped at one or both ends by the 19S regulatory particle (RP/PA700). The RP/PA700 complex is composed of at least 17 different subunits in two subcomplexes, the base and the lid, which form the portions proximal and distal to the 20S proteolytic core, respectively. Ubiquitinated. Expressed in stems, leaves, buds, flowers, siliques and developing seeds.

In terms of biological role, acts as a regulatory subunit of the 26 proteasome which is involved in the ATP-dependent degradation of ubiquitinated proteins. The polypeptide is 26S proteasome non-ATPase regulatory subunit 2 homolog B (RPN1B) (Arabidopsis thaliana (Mouse-ear cress)).